A 148-amino-acid polypeptide reads, in one-letter code: Cell division protein SepF (148 aa).

A disordered region spans residues 1 to 59; sequence MNNKFKDFFGFGDNDSYEERDAYEEHYDEQEEMQNSNRPTNSRDSNVVSIKAGQAGSGP. Residues 33–48 show a composition bias toward polar residues; sequence MQNSNRPTNSRDSNVV.

This sequence belongs to the SepF family. Homodimer. Interacts with FtsZ.

It is found in the cytoplasm. In terms of biological role, cell division protein that is part of the divisome complex and is recruited early to the Z-ring. Probably stimulates Z-ring formation, perhaps through the cross-linking of FtsZ protofilaments. Its function overlaps with FtsA. This Lactobacillus delbrueckii subsp. bulgaricus (strain ATCC BAA-365 / Lb-18) protein is Cell division protein SepF.